Here is a 143-residue protein sequence, read N- to C-terminus: 1,4-dihydroxy-2-naphthoyl-CoA hydrolase (143 aa).

Asp-14 is an active-site residue.

This sequence belongs to the 4-hydroxybenzoyl-CoA thioesterase family. DHNA-CoA hydrolase subfamily.

It carries out the reaction 1,4-dihydroxy-2-naphthoyl-CoA + H2O = 1,4-dihydroxy-2-naphthoate + CoA + H(+). Its pathway is cofactor biosynthesis; phylloquinone biosynthesis. It participates in quinol/quinone metabolism; 1,4-dihydroxy-2-naphthoate biosynthesis; 1,4-dihydroxy-2-naphthoate from chorismate: step 7/7. In terms of biological role, catalyzes the hydrolysis of 1,4-dihydroxy-2-naphthoyl-CoA (DHNA-CoA) to 1,4-dihydroxy-2-naphthoate (DHNA), a reaction involved in phylloquinone (vitamin K1) biosynthesis. The protein is 1,4-dihydroxy-2-naphthoyl-CoA hydrolase of Gloeothece citriformis (strain PCC 7424) (Cyanothece sp. (strain PCC 7424)).